A 1208-amino-acid chain; its full sequence is DNA-directed RNA polymerase subunit beta (1208 aa).

The protein belongs to the RNA polymerase beta chain family. As to quaternary structure, the RNAP catalytic core consists of 2 alpha, 1 beta, 1 beta' and 1 omega subunit. When a sigma factor is associated with the core the holoenzyme is formed, which can initiate transcription.

The catalysed reaction is RNA(n) + a ribonucleoside 5'-triphosphate = RNA(n+1) + diphosphate. Functionally, DNA-dependent RNA polymerase catalyzes the transcription of DNA into RNA using the four ribonucleoside triphosphates as substrates. This chain is DNA-directed RNA polymerase subunit beta, found in Enterococcus faecium (Streptococcus faecium).